The chain runs to 874 residues: Alanine--tRNA ligase (874 aa).

Residues His562, His566, Cys663, and His667 each contribute to the Zn(2+) site.

This sequence belongs to the class-II aminoacyl-tRNA synthetase family. Requires Zn(2+) as cofactor.

It is found in the cytoplasm. The enzyme catalyses tRNA(Ala) + L-alanine + ATP = L-alanyl-tRNA(Ala) + AMP + diphosphate. In terms of biological role, catalyzes the attachment of alanine to tRNA(Ala) in a two-step reaction: alanine is first activated by ATP to form Ala-AMP and then transferred to the acceptor end of tRNA(Ala). Also edits incorrectly charged Ser-tRNA(Ala) and Gly-tRNA(Ala) via its editing domain. The protein is Alanine--tRNA ligase of Bordetella parapertussis (strain 12822 / ATCC BAA-587 / NCTC 13253).